We begin with the raw amino-acid sequence, 513 residues long: 2-isopropylmalate synthase (513 aa).

The 264-residue stretch at 5-268 folds into the Pyruvate carboxyltransferase domain; it reads LIIFDTTLRD…DVGIDTTQIV (264 aa). Mn(2+) contacts are provided by Asp-14, His-202, His-204, and Asn-239. Positions 394–513 are regulatory domain; sequence RFISLSQRSE…KAVQKINPQI (120 aa).

Belongs to the alpha-IPM synthase/homocitrate synthase family. LeuA type 1 subfamily. In terms of assembly, homodimer. Mn(2+) serves as cofactor.

Its subcellular location is the cytoplasm. The enzyme catalyses 3-methyl-2-oxobutanoate + acetyl-CoA + H2O = (2S)-2-isopropylmalate + CoA + H(+). It participates in amino-acid biosynthesis; L-leucine biosynthesis; L-leucine from 3-methyl-2-oxobutanoate: step 1/4. Functionally, catalyzes the condensation of the acetyl group of acetyl-CoA with 3-methyl-2-oxobutanoate (2-ketoisovalerate) to form 3-carboxy-3-hydroxy-4-methylpentanoate (2-isopropylmalate). This chain is 2-isopropylmalate synthase, found in Cupriavidus metallidurans (strain ATCC 43123 / DSM 2839 / NBRC 102507 / CH34) (Ralstonia metallidurans).